The chain runs to 299 residues: Oxygen-dependent coproporphyrinogen-III oxidase (299 aa).

S92 is a substrate binding site. Positions 96 and 106 each coordinate a divalent metal cation. H106 serves as the catalytic Proton donor. 108–110 (NVR) serves as a coordination point for substrate. A divalent metal cation contacts are provided by H145 and H175. The interval 240-275 (YVEFNLVWDRGTLFGLQTGGRTESILMSMPPLVRWE) is important for dimerization. A substrate-binding site is contributed by 258–260 (GGR).

Belongs to the aerobic coproporphyrinogen-III oxidase family. In terms of assembly, homodimer. The cofactor is a divalent metal cation.

It localises to the cytoplasm. The enzyme catalyses coproporphyrinogen III + O2 + 2 H(+) = protoporphyrinogen IX + 2 CO2 + 2 H2O. The protein operates within porphyrin-containing compound metabolism; protoporphyrin-IX biosynthesis; protoporphyrinogen-IX from coproporphyrinogen-III (O2 route): step 1/1. Involved in the heme biosynthesis. Catalyzes the aerobic oxidative decarboxylation of propionate groups of rings A and B of coproporphyrinogen-III to yield the vinyl groups in protoporphyrinogen-IX. The protein is Oxygen-dependent coproporphyrinogen-III oxidase of Shigella boydii serotype 18 (strain CDC 3083-94 / BS512).